The primary structure comprises 630 residues: Pentatricopeptide repeat-containing protein At1g62670, mitochondrial (630 aa).

The N-terminal 22 residues, 1-22 (MRISFAIASTAKRFVHRSLVVR), are a transit peptide targeting the mitochondrion. PPR repeat units lie at residues 44–79 (TSYD…RPFP), 80–114 (SIIE…GIPH), 115–149 (NHYT…GYEP), 150–184 (NIVT…GYQP), 185–219 (NTVT…GCQP), 220–254 (DLVT…KLEP), 255–289 (GVLI…GIRP), 290–324 (NVVT…KINP), 325–359 (DVFT…SIDP), 360–394 (SIVT…HCFP), 395–429 (DVVT…GLVG), 430–464 (NTVT…GVPP), 465–499 (NIMT…KMEP), 500–534 (TIYT…GVKP), 535–569 (DVVA…GTLP), and 570–604 (NSGC…GFAG).

It belongs to the PPR family. P subfamily.

It localises to the mitochondrion. The protein is Pentatricopeptide repeat-containing protein At1g62670, mitochondrial of Arabidopsis thaliana (Mouse-ear cress).